The following is a 206-amino-acid chain: Orotate phosphoribosyltransferase (206 aa).

5-phospho-alpha-D-ribose 1-diphosphate is bound by residues K26, 72-73 (YK), R99, K100, K103, H105, and 124-132 (DDVMTSGFS). The orotate site is built by T128 and R157.

The protein belongs to the purine/pyrimidine phosphoribosyltransferase family. PyrE subfamily. Homodimer. Mg(2+) is required as a cofactor.

It catalyses the reaction orotidine 5'-phosphate + diphosphate = orotate + 5-phospho-alpha-D-ribose 1-diphosphate. It functions in the pathway pyrimidine metabolism; UMP biosynthesis via de novo pathway; UMP from orotate: step 1/2. In terms of biological role, catalyzes the transfer of a ribosyl phosphate group from 5-phosphoribose 1-diphosphate to orotate, leading to the formation of orotidine monophosphate (OMP). This chain is Orotate phosphoribosyltransferase, found in Buchnera aphidicola subsp. Baizongia pistaciae (strain Bp).